A 358-amino-acid polypeptide reads, in one-letter code: Ubiquitin thioesterase OTU1 (358 aa).

A Ubiquitin-like domain is found at 5 to 87; that stretch reads FSVKLKSKKG…LIVEEKAGAA (83 aa). Positions 8–94 are UBX-like; it reads KLKSKKGQFI…GAAGPTSTPL (87 aa). The disordered stretch occupies residues 83 to 108; it reads KAGAAGPTSTPLASGSGSSTMEDDEA. A compositionally biased stretch (polar residues) spans 89–102; the sequence is PTSTPLASGSGSST. The OTU domain maps to 161–285; the sequence is LLKKVVPADN…GIHYDPLYME (125 aa). Residues 166 to 172 form a cys-loop region; the sequence is VPADNSC. Aspartate 169 is an active-site residue. Catalysis depends on cysteine 172, which acts as the Nucleophile. Positions 224-234 are variable-loop; that stretch reads IQKADSWGGAI. The his-loop stretch occupies residues 274 to 278; that stretch reads FDGIH. Isoleucine 277 provides a ligand contact to substrate. Histidine 278 is an active-site residue. An S2 site region spans residues 301 to 306; the sequence is MGVYQQ. The C2H2-type zinc finger occupies 328 to 352; sequence LRCMDCDVMLVGQGQAQEHAKKTGH. Residue histidine 352 is part of the active site.

It catalyses the reaction Thiol-dependent hydrolysis of ester, thioester, amide, peptide and isopeptide bonds formed by the C-terminal Gly of ubiquitin (a 76-residue protein attached to proteins as an intracellular targeting signal).. Its function is as follows. Hydrolase that can remove conjugated ubiquitin from proteins and may therefore play an important regulatory role at the level of protein turnover by preventing degradation. The polypeptide is Ubiquitin thioesterase OTU1 (Drosophila pseudoobscura pseudoobscura (Fruit fly)).